We begin with the raw amino-acid sequence, 423 residues long: Acetylornithine aminotransferase, mitochondrial (423 aa).

Position 276 is an N6-(pyridoxal phosphate)lysine (lysine 276).

It belongs to the class-III pyridoxal-phosphate-dependent aminotransferase family. Pyridoxal 5'-phosphate is required as a cofactor.

The protein localises to the mitochondrion matrix. It catalyses the reaction N(2)-acetyl-L-ornithine + 2-oxoglutarate = N-acetyl-L-glutamate 5-semialdehyde + L-glutamate. Its pathway is amino-acid biosynthesis; L-arginine biosynthesis; N(2)-acetyl-L-ornithine from L-glutamate: step 4/4. This Eremothecium gossypii (strain ATCC 10895 / CBS 109.51 / FGSC 9923 / NRRL Y-1056) (Yeast) protein is Acetylornithine aminotransferase, mitochondrial (ARG8).